We begin with the raw amino-acid sequence, 634 residues long: DNA-directed RNA polymerase subunit gamma (634 aa).

Zn(2+) is bound by residues Cys74, Cys76, Cys89, and Cys92. Residues Asp471, Asp473, and Asp475 each contribute to the Mg(2+) site.

It belongs to the RNA polymerase beta' chain family. RpoC1 subfamily. As to quaternary structure, in cyanobacteria the RNAP catalytic core is composed of 2 alpha, 1 beta, 1 beta', 1 gamma and 1 omega subunit. When a sigma factor is associated with the core the holoenzyme is formed, which can initiate transcription. The cofactor is Mg(2+). Requires Zn(2+) as cofactor.

It catalyses the reaction RNA(n) + a ribonucleoside 5'-triphosphate = RNA(n+1) + diphosphate. In terms of biological role, DNA-dependent RNA polymerase catalyzes the transcription of DNA into RNA using the four ribonucleoside triphosphates as substrates. This chain is DNA-directed RNA polymerase subunit gamma, found in Prochlorococcus marinus (strain MIT 9215).